A 164-amino-acid chain; its full sequence is Putative 4-hydroxy-4-methyl-2-oxoglutarate aldolase (164 aa).

Substrate-binding positions include 80–83 (GGNL) and R102. A divalent metal cation is bound at residue D103.

This sequence belongs to the class II aldolase/RraA-like family. As to quaternary structure, homotrimer. It depends on a divalent metal cation as a cofactor.

It catalyses the reaction 4-hydroxy-4-methyl-2-oxoglutarate = 2 pyruvate. It carries out the reaction oxaloacetate + H(+) = pyruvate + CO2. Its function is as follows. Catalyzes the aldol cleavage of 4-hydroxy-4-methyl-2-oxoglutarate (HMG) into 2 molecules of pyruvate. Also contains a secondary oxaloacetate (OAA) decarboxylase activity due to the common pyruvate enolate transition state formed following C-C bond cleavage in the retro-aldol and decarboxylation reactions. This is Putative 4-hydroxy-4-methyl-2-oxoglutarate aldolase from Paraburkholderia phymatum (strain DSM 17167 / CIP 108236 / LMG 21445 / STM815) (Burkholderia phymatum).